Here is an 864-residue protein sequence, read N- to C-terminus: DNA mismatch repair protein MutS (864 aa).

613–620 is an ATP binding site; the sequence is GPNMGGKS.

It belongs to the DNA mismatch repair MutS family.

In terms of biological role, this protein is involved in the repair of mismatches in DNA. It is possible that it carries out the mismatch recognition step. This protein has a weak ATPase activity. This chain is DNA mismatch repair protein MutS, found in Actinobacillus pleuropneumoniae serotype 7 (strain AP76).